Reading from the N-terminus, the 365-residue chain is D-alanine--D-alanine ligase (365 aa).

One can recognise an ATP-grasp domain in the interval lysine 156–glutamate 360. Lysine 183–glutamate 238 contacts ATP. Mg(2+)-binding residues include aspartate 315, glutamate 327, and asparagine 329.

The protein belongs to the D-alanine--D-alanine ligase family. The cofactor is Mg(2+). Mn(2+) is required as a cofactor.

It is found in the cytoplasm. The enzyme catalyses 2 D-alanine + ATP = D-alanyl-D-alanine + ADP + phosphate + H(+). It participates in cell wall biogenesis; peptidoglycan biosynthesis. In terms of biological role, cell wall formation. This is D-alanine--D-alanine ligase from Corynebacterium diphtheriae (strain ATCC 700971 / NCTC 13129 / Biotype gravis).